The primary structure comprises 103 residues: Putative membrane protein insertion efficiency factor (103 aa).

The protein belongs to the UPF0161 family.

The protein localises to the cell membrane. Functionally, could be involved in insertion of integral membrane proteins into the membrane. The protein is Putative membrane protein insertion efficiency factor of Clavibacter sepedonicus (Clavibacter michiganensis subsp. sepedonicus).